The primary structure comprises 491 residues: Ketol-acid reductoisomerase (NADP(+)) (491 aa).

Positions 16–207 (IKKCRFMKEN…GGHRAGVLES (192 aa)) constitute a KARI N-terminal Rossmann domain. NADP(+) is bound by residues 44–47 (CGSQ), Lys-67, Ser-77, and 107–109 (DKQ). His-131 is a catalytic residue. Residue Gly-157 coordinates NADP(+). KARI C-terminal knotted domains follow at residues 208–344 (SFIA…NILS) and 345–484 (YSEK…MKEM). 4 residues coordinate Mg(2+): Asp-216, Glu-220, Glu-389, and Glu-393. A substrate-binding site is contributed by Ser-414.

Belongs to the ketol-acid reductoisomerase family. Requires Mg(2+) as cofactor.

The enzyme catalyses (2R)-2,3-dihydroxy-3-methylbutanoate + NADP(+) = (2S)-2-acetolactate + NADPH + H(+). The catalysed reaction is (2R,3R)-2,3-dihydroxy-3-methylpentanoate + NADP(+) = (S)-2-ethyl-2-hydroxy-3-oxobutanoate + NADPH + H(+). The protein operates within amino-acid biosynthesis; L-isoleucine biosynthesis; L-isoleucine from 2-oxobutanoate: step 2/4. It participates in amino-acid biosynthesis; L-valine biosynthesis; L-valine from pyruvate: step 2/4. Involved in the biosynthesis of branched-chain amino acids (BCAA). Catalyzes an alkyl-migration followed by a ketol-acid reduction of (S)-2-acetolactate (S2AL) to yield (R)-2,3-dihydroxy-isovalerate. In the isomerase reaction, S2AL is rearranged via a Mg-dependent methyl migration to produce 3-hydroxy-3-methyl-2-ketobutyrate (HMKB). In the reductase reaction, this 2-ketoacid undergoes a metal-dependent reduction by NADPH to yield (R)-2,3-dihydroxy-isovalerate. The protein is Ketol-acid reductoisomerase (NADP(+)) of Buchnera aphidicola subsp. Schizaphis graminum (strain Sg).